The chain runs to 243 residues: uncharacterized protein (243 aa).

Residues 157–181 are disordered; that stretch reads SEETKEQPDATTSEKSRSPECPKTT.

This is an uncharacterized protein from Rattus norvegicus (Rat).